Here is a 616-residue protein sequence, read N- to C-terminus: Glutamine--fructose-6-phosphate aminotransferase [isomerizing] (616 aa).

Cys-2 (nucleophile; for GATase activity) is an active-site residue. The 221-residue stretch at 2-222 folds into the Glutamine amidotransferase type-2 domain; the sequence is CGIIGYSGPR…QERIVALSGD (221 aa). The disordered stretch occupies residues 70 to 89; sequence TGIGHTRWATHGEPSDRNAH. SIS domains lie at 289 to 428 and 461 to 606; these read IRDD…LRGF and LAHW…VDRP. The For Fru-6P isomerization activity role is filled by Lys-611.

Homodimer.

It localises to the cytoplasm. The enzyme catalyses D-fructose 6-phosphate + L-glutamine = D-glucosamine 6-phosphate + L-glutamate. In terms of biological role, catalyzes the first step in hexosamine metabolism, converting fructose-6P into glucosamine-6P using glutamine as a nitrogen source. This chain is Glutamine--fructose-6-phosphate aminotransferase [isomerizing], found in Tropheryma whipplei (strain Twist) (Whipple's bacillus).